Here is a 1418-residue protein sequence, read N- to C-terminus: Structural maintenance of chromosomes protein 4 (1418 aa).

Residues 1–122 (MSDSPLSKRQ…SPGRSPTRRL (122 aa)) form a disordered region. Residue serine 2 is modified to N-acetylserine. Polar residues-rich tracts occupy residues 34–43 (ENRVNLSENT) and 68–97 (SGENRYAFSQPTNSTTTSLHVPNLQPPKTS). Position 43 is a phosphothreonine (threonine 43). The span at 107–117 (SQSPPRSPGRS) shows a compositional bias: low complexity. Residue serine 113 is modified to Phosphoserine. Position 185-192 (185-192 (GPNGSGKS)) interacts with ATP. A coiled-coil region spans residues 345 to 673 (GQIENLNEVC…SKAQNKSKVL (329 aa)). Positions 686–799 (NGFHGRLGDL…QNLKQANNVA (114 aa)) constitute an SMC hinge domain. Coiled coils occupy residues 849–1172 (EEVD…CDNY) and 1224–1263 (VLEEYARRLAEFKRRKLDLNNAVQKRDEVKEQLGILKKKR).

It belongs to the SMC family. SMC4 subfamily. Forms a heterodimer with SMC2. Component of the condensin complex, which contains the SMC2 and SMC4 heterodimer, and three non SMC subunits that probably regulate the complex: BRN1, YCS4 and YCG1/YCS5.

The protein resides in the nucleus. It localises to the cytoplasm. The protein localises to the chromosome. Functionally, central component of the condensin complex, a complex required for conversion of interphase chromatin into mitotic-like condense chromosomes. The condensin complex probably introduces positive supercoils into relaxed DNA in the presence of type I topoisomerases and converts nicked DNA into positive knotted forms in the presence of type II topoisomerases. The polypeptide is Structural maintenance of chromosomes protein 4 (SMC4) (Saccharomyces cerevisiae (strain ATCC 204508 / S288c) (Baker's yeast)).